The primary structure comprises 161 residues: SsrA-binding protein (161 aa).

Belongs to the SmpB family.

It localises to the cytoplasm. Its function is as follows. Required for rescue of stalled ribosomes mediated by trans-translation. Binds to transfer-messenger RNA (tmRNA), required for stable association of tmRNA with ribosomes. tmRNA and SmpB together mimic tRNA shape, replacing the anticodon stem-loop with SmpB. tmRNA is encoded by the ssrA gene; the 2 termini fold to resemble tRNA(Ala) and it encodes a 'tag peptide', a short internal open reading frame. During trans-translation Ala-aminoacylated tmRNA acts like a tRNA, entering the A-site of stalled ribosomes, displacing the stalled mRNA. The ribosome then switches to translate the ORF on the tmRNA; the nascent peptide is terminated with the 'tag peptide' encoded by the tmRNA and targeted for degradation. The ribosome is freed to recommence translation, which seems to be the essential function of trans-translation. The sequence is that of SsrA-binding protein from Desulforamulus reducens (strain ATCC BAA-1160 / DSM 100696 / MI-1) (Desulfotomaculum reducens).